Consider the following 308-residue polypeptide: Glycine--tRNA ligase alpha subunit (308 aa).

It belongs to the class-II aminoacyl-tRNA synthetase family. Tetramer of two alpha and two beta subunits.

It localises to the cytoplasm. The enzyme catalyses tRNA(Gly) + glycine + ATP = glycyl-tRNA(Gly) + AMP + diphosphate. This Streptococcus pyogenes serotype M3 (strain SSI-1) protein is Glycine--tRNA ligase alpha subunit.